Here is a 266-residue protein sequence, read N- to C-terminus: Imidazole glycerol phosphate synthase subunit HisF (266 aa).

Active-site residues include aspartate 11 and aspartate 130.

It belongs to the HisA/HisF family. As to quaternary structure, heterodimer of HisH and HisF.

The protein localises to the cytoplasm. It catalyses the reaction 5-[(5-phospho-1-deoxy-D-ribulos-1-ylimino)methylamino]-1-(5-phospho-beta-D-ribosyl)imidazole-4-carboxamide + L-glutamine = D-erythro-1-(imidazol-4-yl)glycerol 3-phosphate + 5-amino-1-(5-phospho-beta-D-ribosyl)imidazole-4-carboxamide + L-glutamate + H(+). It functions in the pathway amino-acid biosynthesis; L-histidine biosynthesis; L-histidine from 5-phospho-alpha-D-ribose 1-diphosphate: step 5/9. Functionally, IGPS catalyzes the conversion of PRFAR and glutamine to IGP, AICAR and glutamate. The HisF subunit catalyzes the cyclization activity that produces IGP and AICAR from PRFAR using the ammonia provided by the HisH subunit. This Verminephrobacter eiseniae (strain EF01-2) protein is Imidazole glycerol phosphate synthase subunit HisF.